Consider the following 338-residue polypeptide: LTAAVAVAGGNSRYVLDGVPRMRERPIGDLVDGLKQLGAEVDCFLGTKCPPVRIVSKGGLPGGKVKLSGSISSQYLTALLMAAPLALGDVEIEIIDKLISVLYVEMTLKLMERFGISVEHSSSWDRFVVRGGQKYKSPGKAYVEGDASSASYFLAGAAVTGGTVTVEGCGTSSLQGDVKFAEVLEQMGAEVTWTENSVTVKGPPRNSSAMKHLRAIDVNMNKMPDVAMTLAVVALFADGPTAIRDVASWRVKETERMIAICTELRKLGATVEEGPDYCIITPPEKLNVTEIDTYDDHRMAMAFSLAACADVPVTINDPGCTRKTFPNYFDVLQQYSKH.

R25 lines the phosphoenolpyruvate pocket. 6 residues coordinate 3-phosphoshikimate: S72, S73, Q74, S100, D225, and K252. Q74 provides a ligand contact to phosphoenolpyruvate. The active-site Proton acceptor is the D225. 3 residues coordinate phosphoenolpyruvate: R256, R298, and K323.

This sequence belongs to the EPSP synthase family.

It localises to the plastid. The protein localises to the chloroplast. The enzyme catalyses 3-phosphoshikimate + phosphoenolpyruvate = 5-O-(1-carboxyvinyl)-3-phosphoshikimate + phosphate. The protein operates within metabolic intermediate biosynthesis; chorismate biosynthesis; chorismate from D-erythrose 4-phosphate and phosphoenolpyruvate: step 6/7. In terms of biological role, catalyzes the transfer of the enolpyruvyl moiety of phosphoenolpyruvate (PEP) to the 5-hydroxyl of shikimate-3-phosphate (S3P) to produce enolpyruvyl shikimate-3-phosphate and inorganic phosphate. This Nicotiana tabacum (Common tobacco) protein is 3-phosphoshikimate 1-carboxyvinyltransferase 2 (EPSPS-2).